Reading from the N-terminus, the 758-residue chain is Ribosomal RNA processing protein 1 homolog B (758 aa).

Position 245 is a phosphoserine (Ser245). The span at 259-272 (AVSKKKTALGKNHS) shows a compositional bias: basic residues. A disordered region spans residues 259–285 (AVSKKKTALGKNHSRKDGLSDERGRDD). The segment covering 273-285 (RKDGLSDERGRDD) has biased composition (basic and acidic residues). Residues Ser350, Ser392, Ser394, and Ser395 each carry the phosphoserine modification. Residues 381–598 (GSRVFCVEEE…KTASLKKRKK (218 aa)) form a disordered region. Basic residues predominate over residues 397–408 (QKRRRKKKKKHH). Positions 447–457 (GAEATSSTGEE) are enriched in low complexity. A phosphoserine mark is found at Ser452 and Ser458. Residues 469–481 (HNKRKRPRKKSPR) are compositionally biased toward basic residues. Residues 498-513 (SQSGPSGSHPQGPRGS) show a composition bias toward low complexity. Ser513 is subject to Phosphoserine. The segment covering 566–575 (QRRRLQKKKA) has biased composition (basic residues). Ser579 carries the phosphoserine modification. Lys652 carries the post-translational modification N6-acetyllysine. The disordered stretch occupies residues 660-681 (KSSTATHPPGPAVQLNKTPSSS). Phosphoserine is present on residues Ser702 and Ser706. A disordered region spans residues 707 to 758 (PTGPSRVAFDPEQKPLHGVLKTPTSSPASSPLVAKKPLTTTPRRRPRAMDFF). Arg712 carries the citrulline modification. Phosphothreonine is present on Thr728. Ser732, Ser735, and Ser736 each carry phosphoserine.

This sequence belongs to the RRP1 family. As to quaternary structure, interacts with the transcriptional activator E2F1. Interacts with serine/threonine-protein phosphatase PP1 subunits PPP1CB and PPP1CC but not with PPP1CA. Interacts with 60S ribosomal proteins RPL5 and RPL27, ribosomal processing protein RRP1/NNP1 and other nucleolar proteins including NOP2/NOL1 and FBL. Also interacts with nucleolar protein NPM1/B23. Interacts with splicing factor SRSF1 and with LUC7L3/CROP. Interacts with GTPase activator SIPA1. Interacts with CBX5/HP1alpha, H1-10, NCL, PARP1, TRIM28 and YBX3. In terms of assembly, (Microbial infection) Interacts with influenza A virus nucleoprotein NP and with RNA-directed RNA polymerase subunits PB1 and PB2. Post-translationally, citrullinated by PADI4.

The protein localises to the nucleus. Its subcellular location is the nucleolus. The protein resides in the nucleoplasm. It is found in the chromosome. Its function is as follows. Positively regulates DNA damage-induced apoptosis by acting as a transcriptional coactivator of proapoptotic target genes of the transcriptional activator E2F1. Likely to play a role in ribosome biogenesis by targeting serine/threonine protein phosphatase PP1 to the nucleolus. Involved in regulation of mRNA splicing. Inhibits SIPA1 GTPase activity. Involved in regulating expression of extracellular matrix genes. Associates with chromatin and may play a role in modulating chromatin structure. (Microbial infection) Following influenza A virus (IAV) infection, promotes viral mRNA transcription by facilitating the binding of IAV RNA-directed RNA polymerase to capped mRNA. The protein is Ribosomal RNA processing protein 1 homolog B (RRP1B) of Homo sapiens (Human).